Reading from the N-terminus, the 150-residue chain is Ribonuclease H (150 aa).

The RNase H type-1 domain occupies 1-141 (MKSIEVHTDG…VDVLARNQAT (141 aa)). The Mg(2+) site is built by Asp9, Glu47, Asp69, and Asp133.

The protein belongs to the RNase H family. Monomer. Mg(2+) serves as cofactor.

It localises to the cytoplasm. The enzyme catalyses Endonucleolytic cleavage to 5'-phosphomonoester.. Functionally, endonuclease that specifically degrades the RNA of RNA-DNA hybrids. The chain is Ribonuclease H from Xanthomonas oryzae pv. oryzae (strain MAFF 311018).